Consider the following 469-residue polypeptide: Cysteine--tRNA ligase (469 aa).

Residue Cys-33 coordinates Zn(2+). Residues 35–45 (PTVYNLLHIGN) carry the 'HIGH' region motif. The Zn(2+) site is built by Cys-214, His-239, and Glu-243. The 'KMSKS' region motif lies at 271 to 275 (KMSKS). Lys-274 is an ATP binding site.

Belongs to the class-I aminoacyl-tRNA synthetase family. As to quaternary structure, monomer. Zn(2+) serves as cofactor.

It is found in the cytoplasm. The catalysed reaction is tRNA(Cys) + L-cysteine + ATP = L-cysteinyl-tRNA(Cys) + AMP + diphosphate. In Petrotoga mobilis (strain DSM 10674 / SJ95), this protein is Cysteine--tRNA ligase.